Here is a 263-residue protein sequence, read N- to C-terminus: Type II restriction enzyme TaqI (263 aa).

Post-translationally, only 15% of purified enzyme (upon expression in E.coli) can be sequenced, suggesting the remainder has a blocked N-terminus.

The catalysed reaction is Endonucleolytic cleavage of DNA to give specific double-stranded fragments with terminal 5'-phosphates.. Functionally, a P subtype restriction enzyme that recognizes the double-stranded sequence 5'-TCGA-3' and cleaves after T-1. The chain is Type II restriction enzyme TaqI (taqIR) from Thermus aquaticus.